The primary structure comprises 369 residues: Dof zinc finger protein DOF2.5 (369 aa).

The segment at 80 to 134 (LNCPRCNSTNTKFCYYNNYSLTQPRYFCKGCRRYWTEGGSLRNVPVGGSSRKNKR) adopts a Dof-type zinc-finger fold. Cys-82, Cys-85, Cys-107, and Cys-110 together coordinate Zn(2+). Disordered regions lie at residues 120 to 149 (LRNV…TIPS), 203 to 224 (EGNG…YGSS), 284 to 304 (TDHQ…HSDH), and 322 to 369 (SSSI…GSSW). The span at 214–224 (PSSSSSVYGSS) shows a compositional bias: low complexity. A compositionally biased stretch (polar residues) spans 284–297 (TDHQGLGHNSNNRS). Positions 342-362 (NNNNNNNSSPNNGYWSGMFST) are enriched in low complexity.

Expressed in the vascular system of the mother plant, but not present in the seed and embryo. In maturing siliques, found all through the funiculus connecting the placenta to the ovule, but not in the ovule.

It is found in the nucleus. Transcription factor specifically involved in the maternal control of seed germination. Regulates transcription by binding to a 5'-AA[AG]G-3' consensus core sequence. May ensure the activation of a component that would trigger germination as a consequence of red light perception. This Arabidopsis thaliana (Mouse-ear cress) protein is Dof zinc finger protein DOF2.5 (DOF2.5).